The sequence spans 216 residues: Octanoyltransferase (216 aa).

In terms of domain architecture, BPL/LPL catalytic spans 33 to 216 (AQTADELWIV…AEKLTRHLSG (184 aa)). Substrate-binding positions include 72–79 (RGGEVTYH), 148–150 (ALG), and 162–164 (GVS). C180 (acyl-thioester intermediate) is an active-site residue.

Belongs to the LipB family.

Its subcellular location is the cytoplasm. It catalyses the reaction octanoyl-[ACP] + L-lysyl-[protein] = N(6)-octanoyl-L-lysyl-[protein] + holo-[ACP] + H(+). Its pathway is protein modification; protein lipoylation via endogenous pathway; protein N(6)-(lipoyl)lysine from octanoyl-[acyl-carrier-protein]: step 1/2. Catalyzes the transfer of endogenously produced octanoic acid from octanoyl-acyl-carrier-protein onto the lipoyl domains of lipoate-dependent enzymes. Lipoyl-ACP can also act as a substrate although octanoyl-ACP is likely to be the physiological substrate. The polypeptide is Octanoyltransferase (Herminiimonas arsenicoxydans).